We begin with the raw amino-acid sequence, 149 residues long: Oligosaccharyltransferase complex subunit ostc-B (149 aa).

The Cytoplasmic portion of the chain corresponds to 1 to 32 (MESLYRIPFTVLECPNLKLKKPSWLHMPSAMT). Residues 33–53 (VYAMVVVSYFLITGGIIYDVI) form a helical membrane-spanning segment. Residues 54 to 83 (VEPPSVGSMTDEHGHQRPVAFLAYRVNGQY) lie on the Extracellular side of the membrane. Residues 84 to 104 (IMEGLASSFLFTMGGLGFIIL) form a helical membrane-spanning segment. The Cytoplasmic portion of the chain corresponds to 105–117 (DRSNAPNIPKLNR). Residues 118–138 (FLLLFIGFVCVLLSFFMARVF) form a helical membrane-spanning segment. The Extracellular portion of the chain corresponds to 139-149 (MRMKLPGYLMG).

This sequence belongs to the OSTC family. As to quaternary structure, specific component of the STT3A-containing form of the oligosaccharyltransferase (OST) complex.

It is found in the membrane. It participates in protein modification; protein glycosylation. In terms of biological role, specific component of the STT3A-containing form of the oligosaccharyl transferase (OST) complex that catalyzes the initial transfer of a defined glycan (Glc(3)Man(9)GlcNAc(2) in eukaryotes) from the lipid carrier dolichol-pyrophosphate to an asparagine residue within an Asn-X-Ser/Thr consensus motif in nascent polypeptide chains, the first step in protein N-glycosylation. N-glycosylation occurs cotranslationally and the complex associates with the Sec61 complex at the channel-forming translocon complex that mediates protein translocation across the endoplasmic reticulum (ER). All subunits are required for a maximal enzyme activity. This Xenopus laevis (African clawed frog) protein is Oligosaccharyltransferase complex subunit ostc-B.